The sequence spans 335 residues: GTPase Obg (335 aa).

In terms of domain architecture, Obg spans 1-158 (MFVDQITLEL…RLVELELKLI (158 aa)). The OBG-type G domain maps to 159–334 (ADIGLVGFPN…LHDLFKSKLS (176 aa)). Residues 165-172 (GFPNAGKS), 190-194 (FTTLH), 215-218 (DIPG), 285-288 (NKID), and 315-317 (SGL) contribute to the GTP site. Mg(2+)-binding residues include serine 172 and threonine 192.

It belongs to the TRAFAC class OBG-HflX-like GTPase superfamily. OBG GTPase family. Monomer. Requires Mg(2+) as cofactor.

The protein resides in the cytoplasm. Functionally, an essential GTPase which binds GTP, GDP and possibly (p)ppGpp with moderate affinity, with high nucleotide exchange rates and a fairly low GTP hydrolysis rate. Plays a role in control of the cell cycle, stress response, ribosome biogenesis and in those bacteria that undergo differentiation, in morphogenesis control. This is GTPase Obg from Chlamydia muridarum (strain MoPn / Nigg).